A 473-amino-acid chain; its full sequence is Bifunctional protein HldE (473 aa).

The tract at residues 1–317 (MKLSMPRFDQ…RRAIQREEGS (317 aa)) is ribokinase. Residue 194 to 197 (NLSE) coordinates ATP. Asp-263 is an active-site residue. Residues 343–473 (FTNGCFDILH…TAIVEKIRKN (131 aa)) form a cytidylyltransferase region.

The protein in the N-terminal section; belongs to the carbohydrate kinase PfkB family. This sequence in the C-terminal section; belongs to the cytidylyltransferase family. As to quaternary structure, homodimer.

It catalyses the reaction D-glycero-beta-D-manno-heptose 7-phosphate + ATP = D-glycero-beta-D-manno-heptose 1,7-bisphosphate + ADP + H(+). It carries out the reaction D-glycero-beta-D-manno-heptose 1-phosphate + ATP + H(+) = ADP-D-glycero-beta-D-manno-heptose + diphosphate. It participates in nucleotide-sugar biosynthesis; ADP-L-glycero-beta-D-manno-heptose biosynthesis; ADP-L-glycero-beta-D-manno-heptose from D-glycero-beta-D-manno-heptose 7-phosphate: step 1/4. The protein operates within nucleotide-sugar biosynthesis; ADP-L-glycero-beta-D-manno-heptose biosynthesis; ADP-L-glycero-beta-D-manno-heptose from D-glycero-beta-D-manno-heptose 7-phosphate: step 3/4. Catalyzes the phosphorylation of D-glycero-D-manno-heptose 7-phosphate at the C-1 position to selectively form D-glycero-beta-D-manno-heptose-1,7-bisphosphate. Functionally, catalyzes the ADP transfer from ATP to D-glycero-beta-D-manno-heptose 1-phosphate, yielding ADP-D-glycero-beta-D-manno-heptose. In Pseudomonas putida (strain W619), this protein is Bifunctional protein HldE.